A 529-amino-acid chain; its full sequence is Bifunctional purine biosynthesis protein PurH (529 aa).

The MGS-like domain occupies 1-148; sequence MQQRRPVRRA…KNHKDVAIVV (148 aa).

This sequence belongs to the PurH family.

It catalyses the reaction (6R)-10-formyltetrahydrofolate + 5-amino-1-(5-phospho-beta-D-ribosyl)imidazole-4-carboxamide = 5-formamido-1-(5-phospho-D-ribosyl)imidazole-4-carboxamide + (6S)-5,6,7,8-tetrahydrofolate. The enzyme catalyses IMP + H2O = 5-formamido-1-(5-phospho-D-ribosyl)imidazole-4-carboxamide. It participates in purine metabolism; IMP biosynthesis via de novo pathway; 5-formamido-1-(5-phospho-D-ribosyl)imidazole-4-carboxamide from 5-amino-1-(5-phospho-D-ribosyl)imidazole-4-carboxamide (10-formyl THF route): step 1/1. The protein operates within purine metabolism; IMP biosynthesis via de novo pathway; IMP from 5-formamido-1-(5-phospho-D-ribosyl)imidazole-4-carboxamide: step 1/1. This is Bifunctional purine biosynthesis protein PurH from Salmonella enteritidis PT4 (strain P125109).